A 212-amino-acid polypeptide reads, in one-letter code: 3-oxo-tetronate 4-phosphate decarboxylase (212 aa).

Catalysis depends on E79, which acts as the Proton acceptor. E79, H98, and H100 together coordinate Zn(2+). Catalysis depends on Y125, which acts as the Proton donor. H165 lines the Zn(2+) pocket.

Belongs to the aldolase class II family. AraD/FucA subfamily. The cofactor is Zn(2+).

It catalyses the reaction 3-dehydro-4-O-phospho-D-erythronate + H(+) = dihydroxyacetone phosphate + CO2. The catalysed reaction is 3-dehydro-4-O-phospho-L-erythronate + H(+) = dihydroxyacetone phosphate + CO2. Catalyzes the decarboxylation of 3-oxo-tetronate 4-phosphate to dihydroxyacetone phosphate (DHAP) and CO(2). In Escherichia coli (strain K12), this protein is 3-oxo-tetronate 4-phosphate decarboxylase.